The sequence spans 409 residues: 2-methylfumaryl-CoA isomerase (409 aa).

Asp165 functions as the Nucleophile in the catalytic mechanism.

Belongs to the CoA-transferase III family. Mesaconyl-CoA isomerase subfamily. As to quaternary structure, homodimer.

The enzyme catalyses 2-methylfumaryl-CoA = 3-methylfumaryl-CoA. With respect to regulation, partially inhibited by hydroxylamine. Functionally, involved in the glyoxylate assimilation cycle used to regenerate acetyl-CoA and produce pyruvate as universal precursor for biosynthesis. This reaction involves an intramolecular CoA transferase that catalyzes the reversible transfer of the CoA moiety from the C1-carboxyl group of mesaconyl-CoA to the C4-carboxyl group. It does not require free mesaconate as CoA acceptor. In Chloroflexus aurantiacus (strain ATCC 29366 / DSM 635 / J-10-fl), this protein is 2-methylfumaryl-CoA isomerase (mct).